Here is a 379-residue protein sequence, read N- to C-terminus: Queuine tRNA-ribosyltransferase (379 aa).

Residue aspartate 94 is the Proton acceptor of the active site. Substrate is bound by residues 94-98 (DSGGF), aspartate 148, glutamine 191, and glycine 218. Positions 249 to 255 (GVGSPDS) are RNA binding. Aspartate 268 (nucleophile) is an active-site residue. An RNA binding; important for wobble base 34 recognition region spans residues 273–277 (TRIAR). Positions 306, 308, 311, and 337 each coordinate Zn(2+).

It belongs to the queuine tRNA-ribosyltransferase family. As to quaternary structure, homodimer. Within each dimer, one monomer is responsible for RNA recognition and catalysis, while the other monomer binds to the replacement base PreQ1. The cofactor is Zn(2+).

The enzyme catalyses 7-aminomethyl-7-carbaguanine + guanosine(34) in tRNA = 7-aminomethyl-7-carbaguanosine(34) in tRNA + guanine. Its pathway is tRNA modification; tRNA-queuosine biosynthesis. Functionally, catalyzes the base-exchange of a guanine (G) residue with the queuine precursor 7-aminomethyl-7-deazaguanine (PreQ1) at position 34 (anticodon wobble position) in tRNAs with GU(N) anticodons (tRNA-Asp, -Asn, -His and -Tyr). Catalysis occurs through a double-displacement mechanism. The nucleophile active site attacks the C1' of nucleotide 34 to detach the guanine base from the RNA, forming a covalent enzyme-RNA intermediate. The proton acceptor active site deprotonates the incoming PreQ1, allowing a nucleophilic attack on the C1' of the ribose to form the product. After dissociation, two additional enzymatic reactions on the tRNA convert PreQ1 to queuine (Q), resulting in the hypermodified nucleoside queuosine (7-(((4,5-cis-dihydroxy-2-cyclopenten-1-yl)amino)methyl)-7-deazaguanosine). This is Queuine tRNA-ribosyltransferase from Bacillus mycoides (strain KBAB4) (Bacillus weihenstephanensis).